The primary structure comprises 2320 residues: Bromodomain and WD repeat-containing protein 1 (2320 aa).

8 WD repeats span residues 184–223, 226–265, 268–311, 322–365, 366–405, 424–463, 466–506, and 514–553; these read GHLSAVYCVAFDRTGHRIFTGSDDCLVKIWSTHNGRLLST, GHSAEISDMAVNYENTMIAAGSCDKIIRVWCLRTCAPVAV, GHTG…LKFS, RPGV…AELE, SHTDKVDSIQFCNNGDRFLSGSRDGTARIWRFEQLEWRSI, FMKPKVTMIAWNQNDSIVVTAVNDHVLKVWNSYTGQLLHN, GHAD…KMKH, and QGHGAVFDCKFSQDGQHFACTDSHGHLLIFGFGCSKPYEK. Residues 668 to 691 form a disordered region; that stretch reads QRMGADQDTIPRGLSNGEETPRRG. A Phosphothreonine modification is found at T687. A phosphoserine mark is found at S696, S701, and S710. Disordered regions lie at residues 809–867 and 895–925; these read NRSW…RYSD and SEDEISTENLSPPKRRRKRKKENKPKKENLR. Composition is skewed to low complexity over residues 814–824 and 854–867; these read ELSSGNESSSS and YSESSSDSSSRYSD. The span at 907 to 918 shows a compositional bias: basic residues; sequence PKRRRKRKKENK. Residues 1157–1264 enclose the Bromo 1 domain; that stretch reads WGQKSRDEEC…DQLLKFIKNQ (108 aa). The disordered stretch occupies residues 1271 to 1304; sequence ELSNTSENDEQNAEDLDDSDLPKTSSGRRRVHDG. Positions 1277–1289 are enriched in acidic residues; sequence ENDEQNAEDLDDS. The residue at position 1289 (S1289) is a Phosphoserine. The region spanning 1313–1418 is the Bromo 2 domain; sequence YVESNWKKQC…ALFEEKMKKI (106 aa). Positions 1434–1593 are disordered; that stretch reads RSQRFKQRQN…TGPVSLANGC (160 aa). The span at 1443–1454 shows a compositional bias: polar residues; the sequence is NCKGDSQPNKSI. A compositionally biased stretch (basic residues) spans 1455-1464; that stretch reads RNLKPKRLKS. S1475 bears the Phosphoserine mark. The segment covering 1475 to 1496 has biased composition (polar residues); sequence SPTQSTSSRTAYLGTHKTSAGI. T1477 bears the Phosphothreonine mark. S1479 is subject to Phosphoserine. Over residues 1497–1509 the composition is skewed to low complexity; sequence SSGVTSGDSSDSA. A compositionally biased stretch (polar residues) spans 1520–1529; sequence PITNGSTLSE. Residues 1535–1548 are compositionally biased toward low complexity; it reads SLATSLSSSASSSS. Residues 1549 to 1561 show a composition bias toward basic and acidic residues; that stretch reads EESKESSRARESS. Phosphoserine occurs at positions 1605, 1607, 1678, 1683, and 1686. 3 disordered regions span residues 1670–1805, 1817–1839, and 1862–1899; these read ARKK…KYNT, KILSDSEDSESEEQDREDGKCHK, and DHGCETDLDSDDDKIEKPNNFMKDSASQDNGLSRKISR. The segment covering 1676–1687 has biased composition (basic and acidic residues); sequence HNSEDEQSLKSE. Residues 1701-1712 are compositionally biased toward polar residues; that stretch reads PVSSSHTAQSNV. Basic and acidic residues-rich tracts occupy residues 1715-1728 and 1751-1769; these read SENRDSESESDLRV and LKIESSEEDSKSHDSDHAC. Phosphoserine occurs at positions 1755, 1756, 1786, 1788, 1793, and 1820. Residues 1821-1832 are compositionally biased toward acidic residues; it reads DSEDSESEEQDR. At T1867 the chain carries Phosphothreonine. A phosphoserine mark is found at S1871, S1904, S1905, S1907, S1910, and S1943. A Phosphothreonine modification is found at T1955. Disordered regions lie at residues 2014-2077 and 2112-2184; these read LNGD…TLAQ and TKVI…TKGK. Phosphoserine occurs at positions 2018, 2020, and 2052. Composition is skewed to basic and acidic residues over residues 2054–2069 and 2114–2139; these read EDSKSHIPGSETDRTF and VIHDSQETAEKEVKRKRSHPELENVK. Polar residues predominate over residues 2140–2165; it reads ISETTGNSKFRPDTSSKSSDLGSVTE. T2164 carries the post-translational modification Phosphothreonine. A phosphoserine mark is found at S2166 and V2214.

As to quaternary structure, interacts with SMARCA4. In terms of tissue distribution, ubiquitously expressed. Expressed in respiratory epithelial cells and testis spermatozoa.

Its subcellular location is the cytoplasm. The protein localises to the nucleus. It is found in the cell projection. The protein resides in the cilium membrane. It localises to the cytoskeleton. Its subcellular location is the flagellum axoneme. Its function is as follows. May be a transcriptional activator. May be involved in chromatin remodeling. Plays a role in the regulation of cell morphology and cytoskeletal organization. Required in the control of cell shape. This Homo sapiens (Human) protein is Bromodomain and WD repeat-containing protein 1 (BRWD1).